The following is a 203-amino-acid chain: ATP-dependent Clp protease proteolytic subunit (203 aa).

The active-site Nucleophile is Ser-107. Residue His-132 is part of the active site.

Belongs to the peptidase S14 family. Fourteen ClpP subunits assemble into 2 heptameric rings which stack back to back to give a disk-like structure with a central cavity, resembling the structure of eukaryotic proteasomes.

It is found in the cytoplasm. The enzyme catalyses Hydrolysis of proteins to small peptides in the presence of ATP and magnesium. alpha-casein is the usual test substrate. In the absence of ATP, only oligopeptides shorter than five residues are hydrolyzed (such as succinyl-Leu-Tyr-|-NHMec, and Leu-Tyr-Leu-|-Tyr-Trp, in which cleavage of the -Tyr-|-Leu- and -Tyr-|-Trp bonds also occurs).. Cleaves peptides in various proteins in a process that requires ATP hydrolysis. Has a chymotrypsin-like activity. Plays a major role in the degradation of misfolded proteins. The chain is ATP-dependent Clp protease proteolytic subunit from Shewanella piezotolerans (strain WP3 / JCM 13877).